The chain runs to 391 residues: Phosphoprotein (391 aa).

3 positions are modified to phosphothreonine: Thr-10, Thr-16, and Thr-39. Residues Lys-55–Gln-65 are compositionally biased toward polar residues. The segment at Lys-55–Gly-90 is disordered. Ser-69 bears the Phosphoserine mark. A phosphothreonine mark is found at Thr-91, Thr-150, and Thr-165. A disordered region spans residues Thr-145–Val-208. Ser-188 bears the Phosphoserine mark. Residues Ile-216–Gly-279 form a multimerization region. A coiled-coil region spans residues Ala-218–Gln-245. Residue Thr-250 is modified to Phosphothreonine. Phosphoserine is present on Ser-257. Phosphothreonine is present on residues Thr-258 and Thr-282. Phosphoserine occurs at positions 292 and 294. At Thr-298 the chain carries Phosphothreonine. Ser-301 and Ser-374 each carry phosphoserine. Positions Ala-343–Ile-391 are interaction with the nucleoprotein. Thr-375 carries the post-translational modification Phosphothreonine.

It belongs to the rubulavirus/avulavirus P protein family. In terms of assembly, homotetramer. Interacts (via multimerization domain) with polymerase L; this interaction forms the polymerase L-P complex. Interacts (via N-terminus) with N0 (via Ncore); this interaction allows P to chaperon N0 to avoid N polymerization before encapsidation. Interacts (via C-terminus) with N-RNA template; this interaction positions the polymerase on the template for both transcription and replication. Interacts with host RPS6KB1 kinase; this interaction may play a role in the viral replication and transcription.

Essential cofactor of the RNA polymerase L that plays a central role in the transcription and replication by forming the polymerase complex with RNA polymerase L and recruiting L to the genomic N-RNA template for RNA synthesis. Also plays a central role in the encapsidation of nascent RNA chains by forming the encapsidation complex with the nucleocapsid protein N (N-P complex). Acts as a chaperone for newly synthesized free N protein, so-called N0, allowing encapsidation of nascent RNA chains during replication. The nucleoprotein protein N prevents excessive phosphorylation of P, which leads to down-regulation of viral transcription/ replication. Participates, together with N, in the formation of viral factories (viroplasms), which are large inclusions in the host cytoplasm where replication takes place. The polypeptide is Phosphoprotein (Mumps virus genotype B (strain Miyahara vaccine) (MuV)).